Consider the following 484-residue polypeptide: Malonate-semialdehyde dehydrogenase 2 (484 aa).

The NAD(+) site is built by Phe153, Lys177, Glu180, Arg181, Ser230, and Thr252. Cys285 (nucleophile) is an active-site residue. Position 385 (Glu385) interacts with NAD(+).

It belongs to the aldehyde dehydrogenase family. IolA subfamily. As to quaternary structure, homotetramer.

It catalyses the reaction 3-oxopropanoate + NAD(+) + CoA + H2O = hydrogencarbonate + acetyl-CoA + NADH + H(+). The enzyme catalyses 2-methyl-3-oxopropanoate + NAD(+) + CoA + H2O = propanoyl-CoA + hydrogencarbonate + NADH + H(+). The protein operates within polyol metabolism; myo-inositol degradation into acetyl-CoA; acetyl-CoA from myo-inositol: step 7/7. In terms of biological role, catalyzes the oxidation of malonate semialdehyde (MSA) and methylmalonate semialdehyde (MMSA) into acetyl-CoA and propanoyl-CoA, respectively. Is involved in a myo-inositol catabolic pathway. Bicarbonate, and not CO2, is the end-product of the enzymatic reaction. This is Malonate-semialdehyde dehydrogenase 2 from Geobacillus kaustophilus (strain HTA426).